Consider the following 189-residue polypeptide: Coatomer subunit zeta (189 aa).

It belongs to the adaptor complexes small subunit family. Oligomeric complex that consists of at least the alpha, beta, beta', gamma, delta, epsilon and zeta subunits.

It is found in the cytoplasm. The protein resides in the golgi apparatus membrane. Its subcellular location is the cytoplasmic vesicle. It localises to the COPI-coated vesicle membrane. In terms of biological role, the coatomer is a cytosolic protein complex that binds to dilysine motifs and reversibly associates with Golgi non-clathrin-coated vesicles, which further mediate biosynthetic protein transport from the ER, via the Golgi up to the trans Golgi network. Coatomer complex is required for budding from Golgi membranes, and is essential for the retrograde Golgi-to-ER transport of dilysine-tagged proteins. The zeta subunit may be involved in regulating the coat assembly and, hence, the rate of biosynthetic protein transport due to its association-dissociation properties with the coatomer complex. In Saccharomyces cerevisiae (strain ATCC 204508 / S288c) (Baker's yeast), this protein is Coatomer subunit zeta (RET3).